The sequence spans 353 residues: Homeobox protein Mohawk (353 aa).

The segment covering 18–27 has biased composition (basic and acidic residues); the sequence is RGTPDRERGS. Residues 18–50 are disordered; the sequence is RGTPDRERGSRTFSGFLDNPHTGPEVGIPDGPP. The segment at residues 71-132 is a DNA-binding region (homeobox; TALE-type); the sequence is VRHKRQALQD…NARRRLKNTV (62 aa). 2 disordered regions span residues 157–183 and 243–302; these read LSVS…EEGY and MGKT…PSKD.

Belongs to the TALE/IRO homeobox family.

Its subcellular location is the nucleus. In terms of biological role, may act as a morphogenetic regulator of cell adhesion. Participates in the early events that lead to differentiation. The polypeptide is Homeobox protein Mohawk (Mkx) (Mus musculus (Mouse)).